The chain runs to 227 residues: Small ribosomal subunit protein uS3 (227 aa).

One can recognise a KH type-2 domain in the interval 38-106 (LRKYLREKLA…EVHLNIVEIR (69 aa)).

It belongs to the universal ribosomal protein uS3 family. In terms of assembly, part of the 30S ribosomal subunit. Forms a tight complex with proteins S10 and S14.

In terms of biological role, binds the lower part of the 30S subunit head. Binds mRNA in the 70S ribosome, positioning it for translation. This chain is Small ribosomal subunit protein uS3, found in Paramagnetospirillum magneticum (strain ATCC 700264 / AMB-1) (Magnetospirillum magneticum).